The following is a 431-amino-acid chain: Keratin, type I cytoskeletal 40 (431 aa).

Positions 1-89 (MTSDCSSTHC…CEDGVFTSNE (89 aa)) are head. The 312-residue stretch at 89–400 (EKETMQFLND…GLLDSEDSRL (312 aa)) folds into the IF rod domain. The interval 90 to 124 (KETMQFLNDRLASYLEKVRSLEETNAELESRIQEQ) is coil 1A. A linker 1 region spans residues 125-135 (CEQDIPMVCPD). Positions 136-236 (YQRYFNTIED…HEEEVNLLRE (101 aa)) are coil 1B. The tract at residues 237–252 (QLGDRLSVELDTAPTL) is linker 12. Residues 253–396 (DLNRVLDEMR…NTYWGLLDSE (144 aa)) form a coil 2 region. The segment at 397–431 (DSRLSCSPCSTTCTSSNTCEPCSAYVICTVENCCL) is tail.

This sequence belongs to the intermediate filament family. In terms of assembly, heterotetramer of two type I and two type II keratins. In terms of tissue distribution, expressed in skin and scalp. Also very weakly expressed in tongue, breast, colon and small intestine. In the hair follicle, it is specifically present in the upper hair cuticle. Not present in the upper cortex (at protein level).

Its function is as follows. May play a role in late hair differentiation. The chain is Keratin, type I cytoskeletal 40 (KRT40) from Homo sapiens (Human).